The following is a 1349-amino-acid chain: Patatin-like phospholipase domain-containing protein 7 (1349 aa).

The Lumenal portion of the chain corresponds to 1-36; the sequence is MQKEEDVCPEAGYCLGTALSSWGLHFMEEHSQSTML. The helical transmembrane segment at 37 to 57 threads the bilayer; the sequence is MGIGIGVLLTLAFVGLAAFFV. The Cytoplasmic portion of the chain corresponds to 58-1349; it reads YRKVSRFRRA…DQGPRLYRPS (1292 aa). Residue 170–297 participates in a nucleoside 3',5'-cyclic phosphate binding; the sequence is VLGHFEKPLF…VRVVQIIMVR (128 aa). Residues 340–361 are disordered; that stretch reads MSYGPEEQLERSPRLSEFNSSD. Residues Ser-341 and Ser-377 each carry the phosphoserine modification. A nucleoside 3',5'-cyclic phosphate-binding positions include 496–599 and 610–715; these read FLHV…VVRR and ALDW…LGEK. An involved in the binding to lipid droplets region spans residues 678-964; the sequence is VHAVRDSELA…RGCAQVGILR (287 aa). The PNPLA domain occupies 947-1113; the sequence is LVLGGGGARG…INNLPADVAR (167 aa). The short motif at 951-956 is the GXGXXG element; it reads GGGARG. Positions 978 to 982 match the GXSXG motif; it reads GTSIG. The active-site Nucleophile is Ser-980. Asp-1100 acts as the Proton acceptor in catalysis. The DGA/G signature appears at 1100-1102; that stretch reads DGG. Ser-1277 is modified (phosphoserine). Position 1281 is a phosphothreonine (Thr-1281). A disordered region spans residues 1297–1349; sequence DFQSTGIELDSDSECEPSMSQGPHSLTSPKQSQDSFPWLPNQDDQGPRLYRPS. A compositionally biased stretch (polar residues) spans 1314 to 1331; sequence SMSQGPHSLTSPKQSQDS.

Belongs to the NTE family. As to expression, expressed in the brain, liver, kidney, lung and testis.

It is found in the endoplasmic reticulum membrane. It localises to the lipid droplet. It carries out the reaction a 1-acyl-sn-glycero-3-phosphocholine + H2O = sn-glycerol 3-phosphocholine + a fatty acid + H(+). It catalyses the reaction 1-(9Z-octadecenoyl)-sn-glycero-3-phosphocholine + H2O = sn-glycerol 3-phosphocholine + (9Z)-octadecenoate + H(+). The enzyme catalyses 1-(9Z-octadecenoyl)-sn-glycero-3-phosphoethanolamine + H2O = sn-glycero-3-phosphoethanolamine + (9Z)-octadecenoate + H(+). The catalysed reaction is 1-(9Z-octadecenoyl)-sn-glycero-3-phospho-L-serine + H2O = sn-glycero-3-phospho-L-serine + (9Z)-octadecenoate + H(+). It carries out the reaction 1-hexadecanoyl-sn-glycero-3-phosphocholine + H2O = sn-glycerol 3-phosphocholine + hexadecanoate + H(+). It catalyses the reaction 1-hexadecanoyl-sn-glycero-3-phosphate + H2O = sn-glycerol 3-phosphate + hexadecanoate + H(+). Lysophospholipase which preferentially deacylates unsaturated lysophosphatidylcholine (C18:1), generating glycerophosphocholine. Also can deacylate, to a lesser extent, lysophosphatidylethanolamine (C18:1), lysophosphatidyl-L-serine (C18:1) and lysophosphatidic acid (C16:0). The sequence is that of Patatin-like phospholipase domain-containing protein 7 (Pnpla7) from Rattus norvegicus (Rat).